The primary structure comprises 130 residues: Small ribosomal subunit protein uS8 (130 aa).

It belongs to the universal ribosomal protein uS8 family. As to quaternary structure, part of the 30S ribosomal subunit. Contacts proteins S5 and S12.

Its function is as follows. One of the primary rRNA binding proteins, it binds directly to 16S rRNA central domain where it helps coordinate assembly of the platform of the 30S subunit. This Cronobacter sakazakii (strain ATCC BAA-894) (Enterobacter sakazakii) protein is Small ribosomal subunit protein uS8.